Consider the following 377-residue polypeptide: Opsin-2 (377 aa).

Topologically, residues 1-57 (MNNQSENYYHGAQFEALKSAGAIEMLGDGLTGDDLAAIPEHWLSYPAPPASAHTALA) are extracellular. Residue Asn-3 is glycosylated (N-linked (GlcNAc...) asparagine). A helical membrane pass occupies residues 58 to 78 (LLYIFFTFAALVGNGMVIFIF). Topologically, residues 79–89 (STTKSLRTSSN) are cytoplasmic. A helical membrane pass occupies residues 90–110 (FLVLNLAILDFIMMAKAPIFI). Topologically, residues 111–126 (YNSAMRGFAVGTVGCQ) are extracellular. Residues Cys-125 and Cys-202 are joined by a disulfide bond. The chain crosses the membrane as a helical span at residues 127–146 (IFALMGAYSGIGAGMTNACI). Over 147-166 (AYDRHSTITRPLDGRLSEGK) the chain is Cytoplasmic. Residues 167–187 (VLLMVAFVWIYSTPWALLPLL) traverse the membrane as a helical segment. The Extracellular segment spans residues 188–214 (KIWGRYVPEGYLTSCSFDYLTNTFDTK). The chain crosses the membrane as a helical span at residues 215 to 235 (LFVACIFTCSYVFPMSLIIYF). The Cytoplasmic portion of the chain corresponds to 236–283 (YSGIVKQVFAHEAALREQAKKMNVESLRANQGGSSESAEIRIAKAALT). A helical membrane pass occupies residues 284-304 (VCFLFVASWTPYGVMALIGAF). The Extracellular segment spans residues 305 to 314 (GNQQLLTPGV). Residues 315–335 (TMIPAVACKAVACISPWVYAI) form a helical membrane-spanning segment. The Cytoplasmic segment spans residues 336-377 (RHPMYRQELQRRMPWLQIDEPDDTVSTATSNTTNSAPPAATA). The disordered stretch occupies residues 355-377 (EPDDTVSTATSNTTNSAPPAATA). Residues 361-377 (STATSNTTNSAPPAATA) are compositionally biased toward low complexity.

Belongs to the G-protein coupled receptor 1 family. Opsin subfamily. In the retina, expression is essentially uniformly distributed, but a higher level is seen in the dorsal region of the retina and in the dorsal rim retinulae.

It localises to the membrane. In terms of biological role, visual pigments are the light-absorbing molecules that mediate vision. They consist of an apoprotein, opsin, covalently linked to cis-retinal. May play a role in photoperiodic photoreception. The polypeptide is Opsin-2 (OP2) (Manduca sexta (Tobacco hawkmoth)).